A 338-amino-acid chain; its full sequence is tRNA N6-adenosine threonylcarbamoyltransferase (338 aa).

Residues histidine 111 and histidine 115 each contribute to the Fe cation site. Substrate is bound by residues 134 to 138 (LVSGG), aspartate 167, glycine 180, and asparagine 272. Aspartate 300 serves as a coordination point for Fe cation.

It belongs to the KAE1 / TsaD family. The cofactor is Fe(2+).

It is found in the cytoplasm. It carries out the reaction L-threonylcarbamoyladenylate + adenosine(37) in tRNA = N(6)-L-threonylcarbamoyladenosine(37) in tRNA + AMP + H(+). In terms of biological role, required for the formation of a threonylcarbamoyl group on adenosine at position 37 (t(6)A37) in tRNAs that read codons beginning with adenine. Is involved in the transfer of the threonylcarbamoyl moiety of threonylcarbamoyl-AMP (TC-AMP) to the N6 group of A37, together with TsaE and TsaB. TsaD likely plays a direct catalytic role in this reaction. This is tRNA N6-adenosine threonylcarbamoyltransferase from Shewanella baltica (strain OS223).